The sequence spans 175 residues: Regenerating islet-derived protein 3-beta (175 aa).

Positions 1–26 (MLHRLAFPVMSWMLLSCLMLLSQVQG) are cleaved as a signal peptide. The propeptide occupies 27–37 (EDSPKKIPSAR). Cystine bridges form between Cys-40/Cys-51, Cys-68/Cys-171, and Cys-146/Cys-163. In terms of domain architecture, C-type lectin spans 47 to 172 (YGSYCYALFQ…CEVKLPYVCK (126 aa)). A Zn(2+)-binding site is contributed by His-107. Residues 114 to 116 (EPN) carry the EPN motif. Residue Glu-121 coordinates Zn(2+).

In terms of assembly, forms a hexameric membrane-permeabilizing oligomeric pore on membrane phospholipids. The hexamer is formed by three dimers related by helical symmetry. Forms filaments, filamentation traps pore complexes and limits damage to host cells. Interacts with EXTL3. Post-translationally, proteolytic processing by trypsin removes an inhibitory N-terminal propeptide and is essential for peptidoglycan binding and antibacterial activity. In terms of tissue distribution, constitutively expressed in intestine.

The protein resides in the secreted. Lipopolysaccharide inhibits pore-forming activity, explaining why is bactericidal for Gram-positive but not Gram-negative bacteria. In terms of biological role, bactericidal C-type lectin which acts against several intestinal Gram-positive bacteria and Gram-negative bacteria. Lacks antibacterial activity against S.typhimurium. May play a role in protection against infection with S.enteritidis by inhibiting its translocation from the gut lumen into intestinal tissues and further extraintestinal tissues. Its function is as follows. Acts as a hormone in response to different stimuli. Secreted by different cell types to activate its receptor EXTL3 and induce cell specific signaling pathways. In pancreas, is able stimulate cell proliferation. The polypeptide is Regenerating islet-derived protein 3-beta (Rattus norvegicus (Rat)).